The sequence spans 199 residues: Ribosome biogenesis protein RLP24 (199 aa).

Residues 147-182 (KEQERAESVSEQEESEEEEEDMEIDSDEEEEEQLEK) are disordered. A compositionally biased stretch (acidic residues) spans 156-179 (SEQEESEEEEEDMEIDSDEEEEEQ). Serine 172 bears the Phosphoserine mark.

It belongs to the eukaryotic ribosomal protein eL24 family. As to quaternary structure, associated with nucleolar and cytoplasmic pre-60S particles. At the end of biogenesis it dissociates from cytoplasmic pre-60S particles and is likely to be exchanged for its ribosomal homolog, RPL24. Interacts (via C-terminus) with AFG2 (hexameric form); the interaction is direct, recruits AFG2 to pre-60S ribosomal particles and promotes AFG2 ATPase activity and RLP24 release from pre-60S ribosomal particles. Interacts with NOG1; the interaction is direct.

It is found in the cytoplasm. It localises to the nucleus. Functionally, involved in the biogenesis of the 60S ribosomal subunit. Ensures the docking of NOG1 to pre-60S ribosomal particles. Activates and recruits ATPase AFG2 to cytoplasmic pre-60S ribosomal particles. The sequence is that of Ribosome biogenesis protein RLP24 (RLP24) from Saccharomyces cerevisiae (strain ATCC 204508 / S288c) (Baker's yeast).